The following is a 284-amino-acid chain: tRNA uridine(34) hydroxylase (284 aa).

The Rhodanese domain maps to 132 to 226 (TGRPVVMLDT…YFEEVGGAHY (95 aa)). Cys-186 functions as the Cysteine persulfide intermediate in the catalytic mechanism.

The protein belongs to the TrhO family.

It catalyses the reaction uridine(34) in tRNA + AH2 + O2 = 5-hydroxyuridine(34) in tRNA + A + H2O. Catalyzes oxygen-dependent 5-hydroxyuridine (ho5U) modification at position 34 in tRNAs. This Burkholderia lata (strain ATCC 17760 / DSM 23089 / LMG 22485 / NCIMB 9086 / R18194 / 383) protein is tRNA uridine(34) hydroxylase.